Consider the following 620-residue polypeptide: DNA mismatch repair protein MutL (620 aa).

The tract at residues 353–375 is disordered; the sequence is SRANGANDFTGRPFSGTERPRGG.

It belongs to the DNA mismatch repair MutL/HexB family.

Its function is as follows. This protein is involved in the repair of mismatches in DNA. It is required for dam-dependent methyl-directed DNA mismatch repair. May act as a 'molecular matchmaker', a protein that promotes the formation of a stable complex between two or more DNA-binding proteins in an ATP-dependent manner without itself being part of a final effector complex. The sequence is that of DNA mismatch repair protein MutL from Chelativorans sp. (strain BNC1).